Reading from the N-terminus, the 382-residue chain is Non-structural maintenance of chromosomes element 4 homolog A (382 aa).

Residues 1-21 are compositionally biased toward basic and acidic residues; that stretch reads MSGDSSGRRPEGRGRGRDPHR. A disordered region spans residues 1–80; that stretch reads MSGDSSGRRP…ASLEEETDPS (80 aa). The segment covering 31-41 has biased composition (low complexity); it reads RSPLSPGSRRG. Over residues 42-55 the composition is skewed to basic and acidic residues; it reads AAPERREAPERPGL. Residues 56–78 show a composition bias toward acidic residues; sequence EDTEPSDSGDEMIDPASLEEETD. T342 bears the Phosphothreonine mark. S374 bears the Phosphoserine mark.

The protein belongs to the NSE4 family. As to quaternary structure, component of the SMC5-SMC6 complex which consists at least of SMC5, SMC6, NSMCE2, NSMCE1, NSMCE4A or EID3 and NSMCE3. NSMCE1, NSMCE4A or EID3 and NSMCE3 probably form a subcomplex that bridges the head domains of the SMC5:SMC6 heterodimer. Interacts with NSMCE3.

It is found in the nucleus. The protein localises to the chromosome. Its subcellular location is the telomere. Component of the SMC5-SMC6 complex, a complex involved in repair of DNA double-strand breaks by homologous recombination. The complex may promote sister chromatid homologous recombination by recruiting the SMC1-SMC3 cohesin complex to double-strand breaks. The complex is required for telomere maintenance via recombination and mediates sumoylation of shelterin complex (telosome) components. The polypeptide is Non-structural maintenance of chromosomes element 4 homolog A (NSMCE4A) (Bos taurus (Bovine)).